The primary structure comprises 166 residues: Phospholipase A2 inhibitor (166 aa).

Residues 1 to 19 (MRLILLSGLLLLGIFLANG) form the signal peptide. The C-type lectin domain maps to 46–161 (LRGAFLTVYK…CDDNLLVVCE (116 aa)). Residues Asn61 and Asn122 are each glycosylated (N-linked (GlcNAc...) asparagine). 2 cysteine pairs are disulfide-bonded: Cys83–Cys160 and Cys138–Cys152.

This sequence belongs to the alpha-type phospholipase A2 inhibitor family. Homotrimer; non-covalently linked. As to expression, expressed by the liver.

It is found in the secreted. This phospholipase A2 inhibitor binds directly phospholipase A2 in the presence or absence of calcium. This chain is Phospholipase A2 inhibitor, found in Bothrops alternatus (Urutu).